The following is a 203-amino-acid chain: Guanylate kinase (203 aa).

The 179-residue stretch at 5 to 183 folds into the Guanylate kinase-like domain; sequence GVLYIISAPS…AVEELKSVVV (179 aa). Residue 12 to 19 coordinates ATP; that stretch reads APSGAGKT.

Belongs to the guanylate kinase family.

The protein localises to the cytoplasm. It carries out the reaction GMP + ATP = GDP + ADP. In terms of biological role, essential for recycling GMP and indirectly, cGMP. The polypeptide is Guanylate kinase (Geobacter metallireducens (strain ATCC 53774 / DSM 7210 / GS-15)).